A 164-amino-acid chain; its full sequence is MNKEPMSMHGYNKICAELKQLKEVERPNIVKEIDIARGHGDLKENAEYHAAKEKQRFIEARIVDLSEIVANAQVIDPSVLAHNKVSFGSTIKILNLDNDKEFSYTIVGSVESDPAKGLISFGSPIAKSLIGKSKGDAVSIQLPNGESDFEILDIYYKEICFDEN.

This sequence belongs to the GreA/GreB family.

In terms of biological role, necessary for efficient RNA polymerase transcription elongation past template-encoded arresting sites. The arresting sites in DNA have the property of trapping a certain fraction of elongating RNA polymerases that pass through, resulting in locked ternary complexes. Cleavage of the nascent transcript by cleavage factors such as GreA or GreB allows the resumption of elongation from the new 3'terminus. GreA releases sequences of 2 to 3 nucleotides. This is Transcription elongation factor GreA from Helicobacter pylori (strain P12).